The primary structure comprises 217 residues: Probable D-methionine transport system permease protein MetI (217 aa).

Positions 13-207 constitute an ABC transmembrane type-1 domain; the sequence is TLETLYMGFI…LIVMLSQKLG (195 aa). 5 consecutive transmembrane segments (helical) span residues 20–40, 58–78, 81–101, 143–163, and 184–204; these read GFIATLFAIVIGLPIGLLAFL, VIINIGRSVPFIILLIILLPF, LVVGTTLGTTAAIVPLSVSAI, IPILINGITLTLVALIGYSAM, and NMIYVKWIATIIIVLIVMLSQ.

Belongs to the binding-protein-dependent transport system permease family. CysTW subfamily.

Its subcellular location is the cell inner membrane. Functionally, part of the binding-protein-dependent transport system for D-methionine. Probably responsible for the translocation of the substrate across the membrane. This Pasteurella multocida (strain Pm70) protein is Probable D-methionine transport system permease protein MetI (metI).